A 111-amino-acid polypeptide reads, in one-letter code: Large ribosomal subunit protein uL22 (111 aa).

This sequence belongs to the universal ribosomal protein uL22 family. Part of the 50S ribosomal subunit.

In terms of biological role, this protein binds specifically to 23S rRNA; its binding is stimulated by other ribosomal proteins, e.g. L4, L17, and L20. It is important during the early stages of 50S assembly. It makes multiple contacts with different domains of the 23S rRNA in the assembled 50S subunit and ribosome. The globular domain of the protein is located near the polypeptide exit tunnel on the outside of the subunit, while an extended beta-hairpin is found that lines the wall of the exit tunnel in the center of the 70S ribosome. This is Large ribosomal subunit protein uL22 from Stenotrophomonas maltophilia (strain R551-3).